The sequence spans 242 residues: Probable transcriptional regulatory protein Bamb_2332 (242 aa).

Belongs to the TACO1 family.

The protein resides in the cytoplasm. The sequence is that of Probable transcriptional regulatory protein Bamb_2332 from Burkholderia ambifaria (strain ATCC BAA-244 / DSM 16087 / CCUG 44356 / LMG 19182 / AMMD) (Burkholderia cepacia (strain AMMD)).